A 337-amino-acid polypeptide reads, in one-letter code: Monoacylglycerol lipase ABHD6 (337 aa).

The Extracellular portion of the chain corresponds to 1–8 (MDLDVVNM). Residues 9-29 (FVIAGGTLAIPILAFVASFLL) form a helical; Signal-anchor for type II membrane protein membrane-spanning segment. Over 30–337 (WPSALIRIYY…HNPDNNKKLN (308 aa)) the chain is Cytoplasmic. Residue Ser-148 is the Nucleophile of the active site. Active-site charge relay system residues include Asp-278 and His-306.

This sequence belongs to the AB hydrolase superfamily.

The protein resides in the late endosome membrane. It is found in the lysosome membrane. Its subcellular location is the mitochondrion membrane. It catalyses the reaction Hydrolyzes glycerol monoesters of long-chain fatty acids.. It carries out the reaction 1-octanoylglycerol + H2O = octanoate + glycerol + H(+). The catalysed reaction is 1-decanoylglycerol + H2O = decanoate + glycerol + H(+). The enzyme catalyses 1-dodecanoylglycerol + H2O = dodecanoate + glycerol + H(+). It catalyses the reaction 1-tetradecanoylglycerol + H2O = tetradecanoate + glycerol + H(+). It carries out the reaction 2-hexadecanoylglycerol + H2O = glycerol + hexadecanoate + H(+). The catalysed reaction is 2-(9Z-octadecenoyl)-glycerol + H2O = glycerol + (9Z)-octadecenoate + H(+). The enzyme catalyses 1-(9Z-octadecenoyl)-glycerol + H2O = glycerol + (9Z)-octadecenoate + H(+). It catalyses the reaction 2-(9Z,12Z-octadecadienoyl)-glycerol + H2O = (9Z,12Z)-octadecadienoate + glycerol + H(+). It carries out the reaction 2-(5Z,8Z,11Z,14Z-eicosatetraenoyl)-glycerol + H2O = glycerol + (5Z,8Z,11Z,14Z)-eicosatetraenoate + H(+). The catalysed reaction is 1-(5Z,8Z,11Z,14Z-eicosatetraenoyl)-glycerol + H2O = glycerol + (5Z,8Z,11Z,14Z)-eicosatetraenoate + H(+). The enzyme catalyses 1-(9Z,12Z-octadecadienoyl)-glycerol + H2O = (9Z,12Z)-octadecadienoate + glycerol + H(+). It catalyses the reaction 3-(9Z-octadecenoyl)-sn-glycero-1-phospho-(3'-(9Z-octadecenoyl)-1'-sn-glycerol) + H2O = 3-(9Z-octadecenoyl)-sn-glycero-1-phospho-(1'-sn-glycerol) + (9Z)-octadecenoate + H(+). It carries out the reaction (S,S)-2-(9Z-octadecenoyl)-sn-glycero-1-phospho-(2'-(9Z-octadecenoyl)-1'-sn-glycerol) + H2O = (S,S)-2-(9Z-octadecenoyl)-sn-glycero-1-phospho-(1'-sn-glycerol) + (9Z)-octadecenoate + H(+). The catalysed reaction is (R,R)-2-(9Z-octadecenoyl)-sn-glycero-3-phospho-(2'-(9Z-octadecenoyl)-3'-sn-glycerol) + H2O = (R,R)-2-(9Z-octadecenoyl)-sn-glycero-3-phospho-(3'-sn-glycerol) + (9Z)-octadecenoate + H(+). Lipase that preferentially hydrolysis medium-chain saturated monoacylglycerols including 2-arachidonoylglycerol. Through 2-arachidonoylglycerol degradation may regulate endocannabinoid signaling pathways. Also has a lysophosphatidyl lipase activity with a preference for lysophosphatidylglycerol among other lysophospholipids. Also able to degrade bis(monoacylglycero)phosphate (BMP) and constitutes the major enzyme for BMP catabolism. BMP, also known as lysobisphosphatidic acid, is enriched in late endosomes and lysosomes and plays a key role in the formation of intraluminal vesicles and in lipid sorting. The chain is Monoacylglycerol lipase ABHD6 from Rattus norvegicus (Rat).